The following is a 25-amino-acid chain: Large ribosomal subunit protein uL30 (25 aa).

Belongs to the universal ribosomal protein uL30 family. In terms of assembly, part of the 50S ribosomal subunit.

The protein is Large ribosomal subunit protein uL30 (rpmD) of Pseudomonas putida (Arthrobacter siderocapsulatus).